A 20-amino-acid chain; its full sequence is T cell receptor alpha joining 42 (20 aa).

Positions 1–20 (YGGSQGNLIFGKGTKLSVKP) are disordered.

In terms of assembly, alpha-beta TR is a heterodimer composed of an alpha and beta chain; disulfide-linked. The alpha-beta TR is associated with the transmembrane signaling CD3 coreceptor proteins to form the TR-CD3 (TcR or TCR). The assembly of alpha-beta TR heterodimers with CD3 occurs in the endoplasmic reticulum where a single alpha-beta TR heterodimer associates with one CD3D-CD3E heterodimer, one CD3G-CD3E heterodimer and one CD247 homodimer forming a stable octameric structure. CD3D-CD3E and CD3G-CD3E heterodimers preferentially associate with TR alpha and TR beta chains, respectively. The association of the CD247 homodimer is the last step of TcR assembly in the endoplasmic reticulum and is required for transport to the cell surface.

The protein resides in the cell membrane. Its function is as follows. J region of the variable domain of T cell receptor (TR) alpha chain that participates in the antigen recognition. Alpha-beta T cell receptors are antigen specific receptors which are essential to the immune response and are present on the cell surface of T lymphocytes. Recognize peptide-major histocompatibility (MH) (pMH) complexes that are displayed by antigen presenting cells (APC), a prerequisite for efficient T cell adaptive immunity against pathogens. Binding of alpha-beta TR to pMH complex initiates TR-CD3 clustering on the cell surface and intracellular activation of LCK that phosphorylates the ITAM motifs of CD3G, CD3D, CD3E and CD247 enabling the recruitment of ZAP70. In turn, ZAP70 phosphorylates LAT, which recruits numerous signaling molecules to form the LAT signalosome. The LAT signalosome propagates signal branching to three major signaling pathways, the calcium, the mitogen-activated protein kinase (MAPK) kinase and the nuclear factor NF-kappa-B (NF-kB) pathways, leading to the mobilization of transcription factors that are critical for gene expression and essential for T cell growth and differentiation. The T cell repertoire is generated in the thymus, by V-(D)-J rearrangement. This repertoire is then shaped by intrathymic selection events to generate a peripheral T cell pool of self-MH restricted, non-autoaggressive T cells. Post-thymic interaction of alpha-beta TR with the pMH complexes shapes TR structural and functional avidity. This is T cell receptor alpha joining 42 from Homo sapiens (Human).